Consider the following 126-residue polypeptide: MIFGTGIDIVDITRFERFLEERNTRLFERLFTIHEQEYCAGKAHSAQHYALRFAAKEAFLKACGLGLREGLTWHDVEVVNDSLGKPDLRLYGKAQQLFADMNLSKTFVSLSHDGNFAVAMVVLERV.

Asp-8 and Glu-57 together coordinate Mg(2+).

Belongs to the P-Pant transferase superfamily. AcpS family. It depends on Mg(2+) as a cofactor.

The protein resides in the cytoplasm. It catalyses the reaction apo-[ACP] + CoA = holo-[ACP] + adenosine 3',5'-bisphosphate + H(+). Functionally, transfers the 4'-phosphopantetheine moiety from coenzyme A to a Ser of acyl-carrier-protein. The chain is Holo-[acyl-carrier-protein] synthase from Geobacter metallireducens (strain ATCC 53774 / DSM 7210 / GS-15).